The following is a 310-amino-acid chain: Vomeronasal type-1 receptor 93 (310 aa).

At 1 to 20 the chain is on the extracellular side; the sequence is MNKDNTLHVDTIMKITMFSE. The chain crosses the membrane as a helical span at residues 21–41; sequence VSVGILANSILFFAHLCMLLG. Residues 42 to 59 are Cytoplasmic-facing; the sequence is ENKPKPIHLYIASLSLTQ. Residues 60 to 80 traverse the membrane as a helical segment; it reads LMLLITMGLIAADMFISQGIW. Residues 81–93 are Extracellular-facing; sequence DSTSCQSLIYLHR. A disulfide bridge links Cys85 with Cys172. A helical transmembrane segment spans residues 94–114; that stretch reads LSRGFTLSAACLLNVFWMITL. Over 115–134 the chain is Cytoplasmic; sequence SSKKSRLTKFKHNSPHHISG. Residues 135 to 155 traverse the membrane as a helical segment; sequence AFLLLCVLYMCFSSHLILSII. Topologically, residues 156-193 are extracellular; it reads ATPNLTSDNFMYVTKSCSFLPMCYSRTSMFSTTIAVRE. A glycan (N-linked (GlcNAc...) asparagine) is linked at Asn159. A helical membrane pass occupies residues 194–214; that stretch reads AFFIGLMALSSGYLVAFLWRH. The Cytoplasmic portion of the chain corresponds to 215–238; sequence RKQAQHLHSTGLSSKASPEQRATE. A helical membrane pass occupies residues 239–259; that stretch reads TILLLMSFFVVLYILENVVFY. Residues 260 to 269 lie on the Extracellular side of the membrane; sequence SRMKFKDGST. A helical membrane pass occupies residues 270-290; sequence FYCVQIIVSHSYATVSSFVFI. The Cytoplasmic portion of the chain corresponds to 291–310; that stretch reads FTEKRMTKILRSVCTRIINI.

It belongs to the G-protein coupled receptor 1 family. Expressed in 1-4% of neurons of the vomeronasal organ. Only one pheromone receptor gene may be expressed in a particular neuron. Not expressed in the main olfactory epithelium.

It is found in the cell membrane. Functionally, putative pheromone receptor implicated in the regulation of social as well as reproductive behavior. The polypeptide is Vomeronasal type-1 receptor 93 (Vom1r93) (Rattus norvegicus (Rat)).